The following is a 118-amino-acid chain: Small ribosomal subunit protein bS6 (118 aa).

The protein belongs to the bacterial ribosomal protein bS6 family.

In terms of biological role, binds together with bS18 to 16S ribosomal RNA. The chain is Small ribosomal subunit protein bS6 from Orientia tsutsugamushi (strain Ikeda) (Rickettsia tsutsugamushi).